Consider the following 545-residue polypeptide: Probable bifunctional tRNA threonylcarbamoyladenosine biosynthesis protein (545 aa).

The tract at residues 1–329 (MDTSKDLICI…YRSDMVEVNW (329 aa)) is kae1. His-112, His-116, and Tyr-133 together coordinate Fe cation. Residues 133–137 (YVSGG), Asp-165, Gly-178, Glu-182, and Asn-262 contribute to the L-threonylcarbamoyladenylate site. Asp-290 provides a ligand contact to Fe cation. The region spanning 344 to 545 (IIPEHLIGKG…KEVEKRARYL (202 aa)) is the Protein kinase domain. Residues 350-358 (IGKGAEADI) and Lys-371 contribute to the ATP site. Catalysis depends on Asp-463, which acts as the Proton acceptor; for kinase activity.

It in the N-terminal section; belongs to the KAE1 / TsaD family. This sequence in the C-terminal section; belongs to the protein kinase superfamily. Tyr protein kinase family. BUD32 subfamily. As to quaternary structure, component of the KEOPS complex that consists of Kae1, Bud32, Cgi121 and Pcc1; the whole complex dimerizes. The cofactor is Fe(2+).

The protein localises to the cytoplasm. It catalyses the reaction L-seryl-[protein] + ATP = O-phospho-L-seryl-[protein] + ADP + H(+). The enzyme catalyses L-threonyl-[protein] + ATP = O-phospho-L-threonyl-[protein] + ADP + H(+). The catalysed reaction is L-threonylcarbamoyladenylate + adenosine(37) in tRNA = N(6)-L-threonylcarbamoyladenosine(37) in tRNA + AMP + H(+). Functionally, required for the formation of a threonylcarbamoyl group on adenosine at position 37 (t(6)A37) in tRNAs that read codons beginning with adenine. Is a component of the KEOPS complex that is probably involved in the transfer of the threonylcarbamoyl moiety of threonylcarbamoyl-AMP (TC-AMP) to the N6 group of A37. The Kae1 domain likely plays a direct catalytic role in this reaction. The Bud32 domain probably displays kinase activity that regulates Kae1 function. This is Probable bifunctional tRNA threonylcarbamoyladenosine biosynthesis protein from Methanococcus maripaludis (strain C5 / ATCC BAA-1333).